The following is a 391-amino-acid chain: Secreted aspartic protease 1 (391 aa).

Residues 1-18 (MFLKNIFIALAIALLVDA) form the signal peptide. Positions 19 to 50 (SPAKRSPGFVTLDFDVIKTPVNATGQEGKVKR) are cleaved as a propeptide — activation peptide. N-linked (GlcNAc...) asparagine glycosylation occurs at N40. In terms of domain architecture, Peptidase A1 spans 64–377 (YAADITIGSN…DLDDDKISLA (314 aa)). The active site involves D82. 82–84 (DTG) lines the pepstatin A pocket. Residues C97 and C109 are joined by a disulfide bond. D241 and D263 together coordinate Zn(2+). D267 is an active-site residue. 267–271 (DSGTT) contacts pepstatin A. An intrachain disulfide couples C305 to C343.

This sequence belongs to the peptidase A1 family. Monomer.

It localises to the secreted. The catalysed reaction is Preferential cleavage at the carboxyl of hydrophobic amino acids, but fails to cleave 15-Leu-|-Tyr-16, 16-Tyr-|-Leu-17 and 24-Phe-|-Phe-25 of insulin B chain. Activates trypsinogen, and degrades keratin.. Its activity is regulated as follows. Inhibited by pepstatin A analogs and squash aspartic peptidase inhibitor (SQAPI). Secreted aspartic peptidases (SAPs) are a group of ten acidic hydrolases considered as key virulence factors. These enzymes supply the fungus with nutrient amino acids as well as are able to degrade the selected host's proteins involved in the immune defense. Induces host inflammatory cytokine production in a proteolytic activity-independent way. Plays a role in tissue damage during superficial infection. Moreover, acts toward human hemoglobin though limited proteolysis to generate a variety of antimicrobial hemocidins, enabling to compete with the other microorganisms of the same physiological niche using the microbicidal peptides generated from the host protein. Its function is as follows. Plays a key role in defense against host by cleaving histatin-5 (Hst 5), a peptide from human saliva that carries out fungicidal activity. The cleavage rate decreases in an order of SAP2 &gt; SAP9 &gt; SAP3 &gt; SAP7 &gt; SAP4 &gt; SAP1 &gt; SAP8. The first cleavage occurs between residues 'Lys-17' and 'His-18' of Hst 5, giving DSHAKRHHGYKRKFHEK and HHSHRGY peptides. Further fragmentation by SAP1 results in AKRHHGYKRKFHEK and AKRHHGY products. This chain is Secreted aspartic protease 1, found in Candida albicans (Yeast).